The primary structure comprises 304 residues: Oxygen-dependent coproporphyrinogen-III oxidase (304 aa).

Serine 94 serves as a coordination point for substrate. Positions 98 and 108 each coordinate a divalent metal cation. The active-site Proton donor is the histidine 108. 110 to 112 (NVR) contacts substrate. A divalent metal cation-binding residues include histidine 147 and histidine 177. The interval 242–277 (YVEFNLVWDRGTLFGLQSGGRTESVLMSMPPLARWQ) is important for dimerization. 260–262 (GGR) provides a ligand contact to substrate.

This sequence belongs to the aerobic coproporphyrinogen-III oxidase family. In terms of assembly, homodimer. A divalent metal cation serves as cofactor.

The protein resides in the cytoplasm. It carries out the reaction coproporphyrinogen III + O2 + 2 H(+) = protoporphyrinogen IX + 2 CO2 + 2 H2O. The protein operates within porphyrin-containing compound metabolism; protoporphyrin-IX biosynthesis; protoporphyrinogen-IX from coproporphyrinogen-III (O2 route): step 1/1. In terms of biological role, involved in the heme biosynthesis. Catalyzes the aerobic oxidative decarboxylation of propionate groups of rings A and B of coproporphyrinogen-III to yield the vinyl groups in protoporphyrinogen-IX. The sequence is that of Oxygen-dependent coproporphyrinogen-III oxidase from Sodalis glossinidius (strain morsitans).